Here is a 186-residue protein sequence, read N- to C-terminus: Tetratricopeptide repeat protein 36 (186 aa).

3 TPR repeats span residues 48–81 (SKALELQGVRAAEAGDLHTALEKFGQAISLLPDR), 83–115 (SAYNNRAQARRLQGDVAGALEDLERAVTLSGGR), and 120–153 (RQSFVQSGLLARFQGRDDDARRDFEKAARLGSPF).

It belongs to the TTC36 family.

This is Tetratricopeptide repeat protein 36 (Ttc36) from Mus musculus (Mouse).